Here is a 393-residue protein sequence, read N- to C-terminus: Chorismate synthase (393 aa).

NADP(+) contacts are provided by R40 and R46. Residues 129 to 131, 249 to 250, G301, 316 to 320, and R342 each bind FMN; these read RSS, QA, and KPIPT.

The protein belongs to the chorismate synthase family. As to quaternary structure, homotetramer. FMNH2 is required as a cofactor.

The enzyme catalyses 5-O-(1-carboxyvinyl)-3-phosphoshikimate = chorismate + phosphate. It functions in the pathway metabolic intermediate biosynthesis; chorismate biosynthesis; chorismate from D-erythrose 4-phosphate and phosphoenolpyruvate: step 7/7. In terms of biological role, catalyzes the anti-1,4-elimination of the C-3 phosphate and the C-6 proR hydrogen from 5-enolpyruvylshikimate-3-phosphate (EPSP) to yield chorismate, which is the branch point compound that serves as the starting substrate for the three terminal pathways of aromatic amino acid biosynthesis. This reaction introduces a second double bond into the aromatic ring system. The protein is Chorismate synthase of Geobacter sulfurreducens (strain ATCC 51573 / DSM 12127 / PCA).